A 417-amino-acid polypeptide reads, in one-letter code: Dibenzothiophene monooxygenase (417 aa).

Residues 18-124 (NDPVAVARGL…HLYTQIAQNN (107 aa)) are helical N-terminus. FMN is bound by residues Y96, 129-134 (NASSEN), 159-163 (KHFCS), R282, 369-370 (AR), and H391. The interval 125 to 233 (WWTGNASSEN…KVEPDEVLGA (109 aa)) is central beta-barrel N-terminus. The tract at residues 131–142 (SSENNSHVLDWK) is lid loop. The segment at 234–417 (PNAFVLAFIQ…GQYPIPGFTS (184 aa)) is helical C-terminus.

This sequence belongs to the DszC flavin monooxygenase family. As to quaternary structure, homotetramer formed by a dimer of dimers; FMN binds between monomers of the homodimer.

It is found in the cytoplasm. The catalysed reaction is dibenzothiophene + 2 FMNH2 + 2 O2 = dibenzothiophene 5,5-dioxide + 2 FMN + 2 H2O + 2 H(+). It carries out the reaction dibenzothiophene + FMNH2 + O2 = dibenzothiophene 5-oxide + FMN + H2O + H(+). The enzyme catalyses dibenzothiophene 5-oxide + FMNH2 + O2 = dibenzothiophene 5,5-dioxide + FMN + H2O + H(+). It participates in sulfur metabolism; dibenzothiophene degradation. DBT degradation completely inhibited by Cu(2+), Mn(2+), p-chloromercuribenzoic acid, 2,2-bipyridyl, 1,10-phenanthroline, and strongly inhibited by Zn(2+), 5,5'- Dithiobis(2-nitrobenzoic acid) and 8-quinolinol. Catalyzes the first step of the '4S' desulfurization pathway that removes covalently bound sulfur from dibenzothiophene (DBT) without breaking carbon-carbon bonds. Sulfur dioxygenase which converts DBT to DBT-sulfone (DBTO2 or DBT 5,5-dioxide) in a stepwise manner. Also acts on thioxanthen-9-one and 4,6-dimethyl DBT and 2,8-dimethyl DBT. In Rhodococcus erythropolis (Arthrobacter picolinophilus), this protein is Dibenzothiophene monooxygenase.